The sequence spans 440 residues: MEKIIVRGGRQLSGSVKVEGAKNAVLPVIAASILASRGTSKIYDVPKLADVYTMKEVLRNLNINVEYENGEFVVNATNPLKTEAPFEYVRKMRASFLVMGPLLARVGHARIALPGGCAIGSRPIDQHLKGFEAMGATVEIGNGFIEAKVEGRLQGTKIYLDFPSVGATENIMMAAAMAEGTTILENAAEEPEIVCLANYLNAMGAKVRGAGTGVIRIEGVDELVGAEHTVISDRIEAGTFMVAAAITGGDVFIEGAVAEHLRPLIAKMHEMGVKTIEEDNGIRVIGPDELKPVDIKTMPHPGFPTDMQSQMMALLLRANGTSVITETVFENRFMHVEEFRRMNGNIKIEGRSAIISGPCQLQGAEVTATDLRAGAALVLAGLVADGHTRVVELKHVDRGYVDLAGKLARLGADIERVVETEHELENLDAPAPLKLNTNLV.

Position 22–23 (22–23 (KN)) interacts with phosphoenolpyruvate. Arg-93 provides a ligand contact to UDP-N-acetyl-alpha-D-glucosamine. Cys-117 (proton donor) is an active-site residue. Position 117 is a 2-(S-cysteinyl)pyruvic acid O-phosphothioketal (Cys-117). Residues 122–126 (RPIDQ), Asp-306, and Val-328 each bind UDP-N-acetyl-alpha-D-glucosamine.

It belongs to the EPSP synthase family. MurA subfamily.

The protein resides in the cytoplasm. The enzyme catalyses phosphoenolpyruvate + UDP-N-acetyl-alpha-D-glucosamine = UDP-N-acetyl-3-O-(1-carboxyvinyl)-alpha-D-glucosamine + phosphate. Its pathway is cell wall biogenesis; peptidoglycan biosynthesis. Functionally, cell wall formation. Adds enolpyruvyl to UDP-N-acetylglucosamine. This Halalkalibacterium halodurans (strain ATCC BAA-125 / DSM 18197 / FERM 7344 / JCM 9153 / C-125) (Bacillus halodurans) protein is UDP-N-acetylglucosamine 1-carboxyvinyltransferase 1.